The chain runs to 353 residues: G-protein coupled estrogen receptor 1 (353 aa).

At 1 to 40 (MEEQTTNVIQIYVNGTEQFNASFDFNITDVKESTDTYEFY) the chain is on the extracellular side. Residues 41–61 (IIGLFLSCLYTIFLFPIGFIG) form a helical membrane-spanning segment. The Cytoplasmic segment spans residues 62–81 (NILILVVNLNHRERMTIPDL). A helical membrane pass occupies residues 82 to 102 (YFVNLAVADLILVADSLIEVF). Topologically, residues 103-112 (NLNEKYYDYA) are extracellular. A helical transmembrane segment spans residues 113-133 (VLCTFMSLFLQVNMYSSIFFL). Cys-115 and Cys-192 are oxidised to a cystine. Topologically, residues 134 to 160 (TWMSFDRYVALTSSMSSSPLRTMQHAK) are cytoplasmic. Residues 161 to 181 (LSCSLIWMASILATLLPFTIV) traverse the membrane as a helical segment. Topologically, residues 182–202 (QTQHTGEVHFCFANVFEIQWL) are extracellular. A helical transmembrane segment spans residues 203-223 (EVTIGFLIPFSIIGLCYSLIV). Residues 224–245 (RTLMRAQKHKGLWPRRQKALRM) lie on the Cytoplasmic side of the membrane. The chain crosses the membrane as a helical span at residues 246 to 266 (IVVVVLVFFICWLPENVFISI). At 267 to 292 (QLLQGTADPSKRTDTTLWHDYPLTGH) the chain is on the extracellular side. Residues 293–313 (IVNLAAFSNSCLNPIIYSFLG) traverse the membrane as a helical segment. Residues 314 to 353 (ETFRDKLRLFIKRKASWSVVYRFCNHTLDLQIPVRSESEV) lie on the Cytoplasmic side of the membrane.

The protein belongs to the G-protein coupled receptor 1 family. In terms of assembly, homodimer. Heterodimer. As to expression, expressed in brain regions that are known to control reproduction and sex behavior. Expressed in ovary, muscle and intestine. Expressed in early germ cells of the testis, including the spermatogonia, spermatocytes, and somatic cells such as Sertoli cells.

It is found in the nucleus. The protein localises to the cytoplasm. The protein resides in the perinuclear region. It localises to the cytoskeleton. Its subcellular location is the cytoplasmic vesicle membrane. It is found in the cell membrane. The protein localises to the basolateral cell membrane. The protein resides in the endoplasmic reticulum membrane. It localises to the early endosome. Its subcellular location is the recycling endosome. It is found in the golgi apparatus. The protein localises to the trans-Golgi network. The protein resides in the golgi apparatus membrane. It localises to the cell projection. Its subcellular location is the dendrite. It is found in the dendritic spine membrane. The protein localises to the axon. The protein resides in the postsynaptic density. It localises to the mitochondrion membrane. Membrane G-protein coupled estrogen receptor that binds to 17-beta-estradiol (E2) with high affinity, leading to rapid and transient activation of numerous intracellular signaling pathways. Plays a role in the embryonic development of sensory and motor neurons. Specifically induces apoptosis and reduces proliferation of brain cells. Involved in maintenance of meiotic arrest in oocytes. The sequence is that of G-protein coupled estrogen receptor 1 (gper1) from Danio rerio (Zebrafish).